A 368-amino-acid chain; its full sequence is UPF0284 protein PCC8801_3324 (368 aa).

It belongs to the UPF0284 family.

This chain is UPF0284 protein PCC8801_3324, found in Rippkaea orientalis (strain PCC 8801 / RF-1) (Cyanothece sp. (strain PCC 8801)).